We begin with the raw amino-acid sequence, 208 residues long: Protein-L-isoaspartate O-methyltransferase (208 aa).

Residue Ser-59 is part of the active site.

This sequence belongs to the methyltransferase superfamily. L-isoaspartyl/D-aspartyl protein methyltransferase family.

The protein localises to the cytoplasm. The catalysed reaction is [protein]-L-isoaspartate + S-adenosyl-L-methionine = [protein]-L-isoaspartate alpha-methyl ester + S-adenosyl-L-homocysteine. Its function is as follows. Catalyzes the methyl esterification of L-isoaspartyl residues in peptides and proteins that result from spontaneous decomposition of normal L-aspartyl and L-asparaginyl residues. It plays a role in the repair and/or degradation of damaged proteins. This chain is Protein-L-isoaspartate O-methyltransferase, found in Escherichia coli O7:K1 (strain IAI39 / ExPEC).